We begin with the raw amino-acid sequence, 756 residues long: Receptor-like protein 3 (756 aa).

The signal sequence occupies residues 1–50; sequence MTNEGRFKAKGFVRTSSTTRPIQALSFHMIGILLQCVLFISVLSIAVSEA. Residues 51–88 form an N-cap region; the sequence is LCNSQDRESLLWFSGNVSSSVSPLNWNPSIDCCSWEGI. Over 51–725 the chain is Extracellular; sequence LCNSQDRESL…ADTEDEEELK (675 aa). The N-linked (GlcNAc...) asparagine glycan is linked to Asn-66. LRR repeat units follow at residues 95-119, 120-143, 145-169, 174-199, 201-225, 226-250, 252-274, 275-298, 299-322, 323-346, 348-370, 371-395, 397-419, 420-443, 445-471, 474-498, 499-521, and 522-546; these read DSHI…VLRL, HHLS…FLSA, DQLK…TFRN, CFPI…IFMQ, TFDL…MCKS, SPQL…LGRC, KLSV…IYNL, SELE…ITHL, TKLK…IGQL, SRLQ…LANC, NLVK…DFSR, FQSL…VHSC, SLSA…VLEL, ESLS…GILQ, CRNL…LISS, FPNL…LIKL, KSLA…WLGT, and FPHL…LFQL. N-linked (GlcNAc...) asparagine glycosylation is found at Asn-126 and Asn-169. Asn-208 carries N-linked (GlcNAc...) asparagine glycosylation. N-linked (GlcNAc...) asparagine glycans are attached at residues Asn-262 and Asn-273. N-linked (GlcNAc...) asparagine glycosylation is found at Asn-334 and Asn-345. A glycan (N-linked (GlcNAc...) asparagine) is linked at Asn-381. Asn-434, Asn-447, and Asn-459 each carry an N-linked (GlcNAc...) asparagine glycan. An LRR 19; degenerate repeat occupies 548–569; sequence ALMSQKAYDATERNYLKLPVFV. 4 LRR repeats span residues 570–593, 608–631, 632–656, and 658–681; these read SPNN…IYIR, LKVL…ELSK, LTSL…LTSL, and YMSY…QFDT. Residue Asn-573 is glycosylated (N-linked (GlcNAc...) asparagine). N-linked (GlcNAc...) asparagine glycosylation occurs at Asn-666. Residues 699–725 are C-cap/acidic domain; that stretch reads LTSCKASTKLPATTTNKADTEDEEELK. A helical membrane pass occupies residues 726-746; the sequence is FIFILGVATGFFVSYCFYWCF. Residues 747 to 756 lie on the Cytoplasmic side of the membrane; the sequence is FARLDAFISK.

Belongs to the RLP family. Expressed at very low levels in the shoot apex.

It localises to the cell membrane. Its function is as follows. Involved in the perception of CLV3 and CLV3-like peptides, that act as extracellular signals regulating meristems maintenance. Contributes, with WAKL22/RFO1, to resistance to F.oxysporum (f.) matthioli in cv. Columbia relative to cv. Ty-0. In Arabidopsis thaliana (Mouse-ear cress), this protein is Receptor-like protein 3.